The following is a 220-amino-acid chain: MRTELTPIEARVIGCLIEKEVTTPDQYPLSLNALTNACNQKSNREPVMSLSESEVLDAVDQLISRRLVSDESGFNSRVSKYQHRFCNTEFGDLKLSAQEKGIVCCMLLRGPQTPGELRTRTNRLATFADVKEVETVLDKLASEERGQLVVKLPIEPGKRESRYMHQFCGEVDLDAFQGSALMTASSTAQFDDERVAHLEAEVEALKQELAELKSLVNSLL.

It belongs to the UPF0502 family.

In Vibrio vulnificus (strain YJ016), this protein is UPF0502 protein VVA1225.